The following is a 521-amino-acid chain: MSDNQREAGTIILDPTHASFAPEETVHDLGATHFIGIGGAGMSVLAEMLHEQGVEVDGSDREPSAKTDRLQSLGITVEFGQQAKNVEGKNTVVFSSAIKPDNPEIVAAHEAGERIVHRSDILALLMNAKRAVTVAGAHGKTTTSSMLAHILVNAGEGELADPSYAIGGSIQGKDGAILDGGHAGKGNVLVAEADESDGSFAKYHPQIAIITNSEADHLDHYGTQDNYRAAFVDHAGHATKAVIMCGDDEGNLAVLRALDATVAGRTIVYSTRNAAELGDLNGATLVRIESESETAESGAEHFTLHIPGGLIGEEERRIAVTLTVPGIHNARNASAAIIAAALLGMDVERASAAVTSFLGAARRFQVRGTVSQVTVVDDYAHHPTEIAALLDAARRRYPQSKIRVIFQPHLFSRTRFFSSEFAQALAKADDVIVTGIFPAREKQEDFPDVTPATIVDEALKLEHEPAKDWIRGVEDMHTAAQMMVMRAHHGDVIFTVGAGDITQMDEVILHALEAHRWDCEG.

136–142 contacts ATP; it reads GAHGKTT.

This sequence belongs to the MurCDEF family.

The protein localises to the cytoplasm. It carries out the reaction UDP-N-acetyl-alpha-D-muramate + L-alanine + ATP = UDP-N-acetyl-alpha-D-muramoyl-L-alanine + ADP + phosphate + H(+). It participates in cell wall biogenesis; peptidoglycan biosynthesis. Functionally, cell wall formation. This chain is UDP-N-acetylmuramate--L-alanine ligase, found in Bifidobacterium adolescentis (strain ATCC 15703 / DSM 20083 / NCTC 11814 / E194a).